The primary structure comprises 100 residues: Nucleoid-associated protein Rcas_2292 (100 aa).

The protein belongs to the YbaB/EbfC family. Homodimer.

Its subcellular location is the cytoplasm. It is found in the nucleoid. In terms of biological role, binds to DNA and alters its conformation. May be involved in regulation of gene expression, nucleoid organization and DNA protection. This Roseiflexus castenholzii (strain DSM 13941 / HLO8) protein is Nucleoid-associated protein Rcas_2292.